The primary structure comprises 369 residues: 4-hydroxy-3-methylbut-2-en-1-yl diphosphate synthase (flavodoxin) (369 aa).

[4Fe-4S] cluster contacts are provided by Cys270, Cys273, Cys305, and Glu312.

It belongs to the IspG family. Requires [4Fe-4S] cluster as cofactor.

It catalyses the reaction (2E)-4-hydroxy-3-methylbut-2-enyl diphosphate + oxidized [flavodoxin] + H2O + 2 H(+) = 2-C-methyl-D-erythritol 2,4-cyclic diphosphate + reduced [flavodoxin]. It participates in isoprenoid biosynthesis; isopentenyl diphosphate biosynthesis via DXP pathway; isopentenyl diphosphate from 1-deoxy-D-xylulose 5-phosphate: step 5/6. Its function is as follows. Converts 2C-methyl-D-erythritol 2,4-cyclodiphosphate (ME-2,4cPP) into 1-hydroxy-2-methyl-2-(E)-butenyl 4-diphosphate. This Pseudomonas fluorescens (strain Pf0-1) protein is 4-hydroxy-3-methylbut-2-en-1-yl diphosphate synthase (flavodoxin).